Consider the following 407-residue polypeptide: Putative cell wall shaping protein YabE (407 aa).

An N-terminal signal peptide occupies residues 1–31 (MKKLFSVKLSKSKVILVAACLLLAGSGTAYA). Residues 206–286 (ITRIEKVTDV…DKVIAVGTKQ (81 aa)) enclose the G5 domain.

In terms of biological role, suggested to be involved in cell wall modification. This chain is Putative cell wall shaping protein YabE (yabE), found in Bacillus subtilis (strain 168).